A 302-amino-acid polypeptide reads, in one-letter code: tRNA dimethylallyltransferase 2 (302 aa).

6–13 is a binding site for ATP; sequence GPTACGKT. 8 to 13 contacts substrate; it reads TACGKT. Interaction with substrate tRNA stretches follow at residues 31 to 34 and 154 to 158; these read DSRQ and QRAIR.

This sequence belongs to the IPP transferase family. Monomer. It depends on Mg(2+) as a cofactor.

It catalyses the reaction adenosine(37) in tRNA + dimethylallyl diphosphate = N(6)-dimethylallyladenosine(37) in tRNA + diphosphate. Functionally, catalyzes the transfer of a dimethylallyl group onto the adenine at position 37 in tRNAs that read codons beginning with uridine, leading to the formation of N6-(dimethylallyl)adenosine (i(6)A). In Porphyromonas gingivalis (strain ATCC BAA-308 / W83), this protein is tRNA dimethylallyltransferase 2.